Consider the following 156-residue polypeptide: Nascent polypeptide-associated complex subunit beta (156 aa).

2 disordered regions span residues 1 to 42 (MPID…KDDT) and 129 to 156 (QANENAGEAKDEAIPELVEGQSFDAEVE). An NAC-A/B domain is found at 38 to 103 (NKDDTKLHNQ…AQEKNLQELF (66 aa)).

This sequence belongs to the NAC-beta family. As to quaternary structure, part of the nascent polypeptide-associated complex (NAC), consisting of EGD2 and EGD1. NAC associates with ribosomes via EGD1.

It localises to the cytoplasm. Its subcellular location is the nucleus. Functionally, component of the nascent polypeptide-associated complex (NAC), a dynamic component of the ribosomal exit tunnel, protecting the emerging polypeptides from interaction with other cytoplasmic proteins to ensure appropriate nascent protein targeting. The NAC complex also promotes mitochondrial protein import by enhancing productive ribosome interactions with the outer mitochondrial membrane and blocks the inappropriate interaction of ribosomes translating non-secretory nascent polypeptides with translocation sites in the membrane of the endoplasmic reticulum. EGD1 may act as a transcription factor that exert a negative effect on the expression of several genes that are transcribed by RNA polymerase II. The polypeptide is Nascent polypeptide-associated complex subunit beta (EGD1) (Candida glabrata (strain ATCC 2001 / BCRC 20586 / JCM 3761 / NBRC 0622 / NRRL Y-65 / CBS 138) (Yeast)).